Here is a 264-residue protein sequence, read N- to C-terminus: 3-methyl-2-oxobutanoate hydroxymethyltransferase (264 aa).

2 residues coordinate Mg(2+): D45 and D84. Residues 45–46 (DS), D84, and K112 each bind 3-methyl-2-oxobutanoate. E114 is a Mg(2+) binding site. Catalysis depends on E181, which acts as the Proton acceptor.

This sequence belongs to the PanB family. As to quaternary structure, homodecamer; pentamer of dimers. Requires Mg(2+) as cofactor.

It is found in the cytoplasm. The catalysed reaction is 3-methyl-2-oxobutanoate + (6R)-5,10-methylene-5,6,7,8-tetrahydrofolate + H2O = 2-dehydropantoate + (6S)-5,6,7,8-tetrahydrofolate. It participates in cofactor biosynthesis; (R)-pantothenate biosynthesis; (R)-pantoate from 3-methyl-2-oxobutanoate: step 1/2. Its function is as follows. Catalyzes the reversible reaction in which hydroxymethyl group from 5,10-methylenetetrahydrofolate is transferred onto alpha-ketoisovalerate to form ketopantoate. The sequence is that of 3-methyl-2-oxobutanoate hydroxymethyltransferase from Escherichia coli O1:K1 / APEC.